We begin with the raw amino-acid sequence, 135 residues long: uncharacterized protein (135 aa).

The disordered stretch occupies residues 100-125 (KESPATSSEDISSCSDCDSERLQSDD). Low complexity predominate over residues 106-115 (SSEDISSCSD).

This is an uncharacterized protein from Microplitis demolitor (Parasitoid wasp).